Consider the following 714-residue polypeptide: Solute carrier family 12 member 8 (714 aa).

6 helical membrane-spanning segments follow: residues 37–60 (VLFG…VLFL), 72–93 (LLGM…LSGI), 99–116 (SSIG…VLGG), 123–142 (GLLY…TGFA), 154–173 (IWAV…GINL), and 185–205 (LLLF…FTHL). Residue Asn-221 is glycosylated (N-linked (GlcNAc...) asparagine). Transmembrane regions (helical) follow at residues 233 to 254 (FFTV…FNMG), 266 to 289 (LGSL…LGAI), 309 to 331 (GFLF…LYGA), 360 to 377 (PVAA…FVFV), and 383 to 403 (LAPI…YSYF). Disordered regions lie at residues 471 to 503 (KLES…TLQD) and 530 to 550 (GQES…PEGT). The span at 533-548 (SCWNKQTSKSEGTQPE) shows a compositional bias: polar residues. The next 2 membrane-spanning stretches (helical) occupy residues 593–616 (CNPW…QWVY) and 622–643 (GVAA…LGSA).

Belongs to the SLC12A transporter family. Ubiquitous with very low level in normal skin.

It localises to the membrane. Cation/chloride cotransporter that may play a role in the control of keratinocyte proliferation. This chain is Solute carrier family 12 member 8 (SLC12A8), found in Homo sapiens (Human).